Here is a 653-residue protein sequence, read N- to C-terminus: MTVSFLRIEIQNCSAGILRFLPRNPDLFAAIKPSSALASLYSTVSGQIEENPKRYEHHNVATCIATLQRCAQRKDYVSGQQIHGFMVRKGFLDDSPRAGTSLVNMYAKCGLMRRAVLVFGGSERDVFGYNALISGFVVNGSPLDAMETYREMRANGILPDKYTFPSLLKGSDAMELSDVKKVHGLAFKLGFDSDCYVGSGLVTSYSKFMSVEDAQKVFDELPDRDDSVLWNALVNGYSQIFRFEDALLVFSKMREEGVGVSRHTITSVLSAFTVSGDIDNGRSIHGLAVKTGSGSDIVVSNALIDMYGKSKWLEEANSIFEAMDERDLFTWNSVLCVHDYCGDHDGTLALFERMLCSGIRPDIVTLTTVLPTCGRLASLRQGREIHGYMIVSGLLNRKSSNEFIHNSLMDMYVKCGDLRDARMVFDSMRVKDSASWNIMINGYGVQSCGELALDMFSCMCRAGVKPDEITFVGLLQACSHSGFLNEGRNFLAQMETVYNILPTSDHYACVIDMLGRADKLEEAYELAISKPICDNPVVWRSILSSCRLHGNKDLALVAGKRLHELEPEHCGGYVLMSNVYVEAGKYEEVLDVRDAMRQQNVKKTPGCSWIVLKNGVHTFFTGNQTHPEFKSIHDWLSLVISHMHGHEYMTVDD.

PPR repeat units follow at residues 59–93 (NVAT…GFLD), 95–119 (SPRA…VLVF), 125–159 (DVFG…GILP), 160–193 (DKYT…GFDS), 194–224 (DCYV…LPDR), 226–260 (DSVL…GVGV), 261–295 (SRHT…GSGS), 296–326 (DIVV…MDER), 327–361 (DLFT…GIRP), 362–396 (DIVT…GLLN), 401–431 (NEFI…MRVK), 432–466 (DSAS…GVKP), 467–497 (DEIT…METV), and 503–537 (TSDH…DNPV). Residues 538–613 (VWRSILSSCR…TPGCSWIVLK (76 aa)) form a type E motif region. The type E(+) motif stretch occupies residues 614 to 644 (NGVHTFFTGNQTHPEFKSIHDWLSLVISHMH).

The protein belongs to the PPR family. PCMP-E subfamily.

The polypeptide is Pentatricopeptide repeat-containing protein At3g14730 (PCMP-E31) (Arabidopsis thaliana (Mouse-ear cress)).